A 251-amino-acid chain; its full sequence is 5'-nucleotidase SurE (251 aa).

A divalent metal cation-binding residues include Asp-8, Asp-9, Ser-42, and Asn-94.

This sequence belongs to the SurE nucleotidase family. A divalent metal cation is required as a cofactor.

It is found in the cytoplasm. It carries out the reaction a ribonucleoside 5'-phosphate + H2O = a ribonucleoside + phosphate. Functionally, nucleotidase that shows phosphatase activity on nucleoside 5'-monophosphates. The chain is 5'-nucleotidase SurE from Hydrogenovibrio crunogenus (strain DSM 25203 / XCL-2) (Thiomicrospira crunogena).